Here is a 156-residue protein sequence, read N- to C-terminus: Small ribosomal subunit protein uS7 (156 aa).

This sequence belongs to the universal ribosomal protein uS7 family. In terms of assembly, part of the 30S ribosomal subunit. Contacts proteins S9 and S11.

One of the primary rRNA binding proteins, it binds directly to 16S rRNA where it nucleates assembly of the head domain of the 30S subunit. Is located at the subunit interface close to the decoding center, probably blocks exit of the E-site tRNA. This chain is Small ribosomal subunit protein uS7, found in Macrococcus caseolyticus (strain JCSC5402) (Macrococcoides caseolyticum).